The sequence spans 313 residues: Phosphoenolpyruvate phosphomutase (313 aa).

The Nucleophile role is filled by D69.

This sequence belongs to the isocitrate lyase/PEP mutase superfamily. PEP mutase family.

It catalyses the reaction phosphoenolpyruvate + H(+) = 3-phosphonopyruvate. Its pathway is secondary metabolite biosynthesis; bialaphos biosynthesis. In terms of biological role, formation of a carbon-phosphorus bond by converting phosphoenolpyruvate (PEP) to phosphonopyruvate (P-Pyr). The chain is Phosphoenolpyruvate phosphomutase (bcpB) from Streptomyces hygroscopicus.